We begin with the raw amino-acid sequence, 495 residues long: UDP-N-acetylmuramoyl-L-alanyl-D-glutamate--2,6-diaminopimelate ligase (495 aa).

Residues L27, S29, and H44–T46 each bind UDP-N-acetyl-alpha-D-muramoyl-L-alanyl-D-glutamate. G116 to T122 contributes to the ATP binding site. UDP-N-acetyl-alpha-D-muramoyl-L-alanyl-D-glutamate is bound by residues N157, T158 to T159, S185, Q191, and R193. K225 is subject to N6-carboxylysine. Residues R390, D414–R417, G465, and E469 contribute to the meso-2,6-diaminopimelate site. The short motif at D414–R417 is the Meso-diaminopimelate recognition motif element.

This sequence belongs to the MurCDEF family. MurE subfamily. Mg(2+) serves as cofactor. In terms of processing, carboxylation is probably crucial for Mg(2+) binding and, consequently, for the gamma-phosphate positioning of ATP.

Its subcellular location is the cytoplasm. It carries out the reaction UDP-N-acetyl-alpha-D-muramoyl-L-alanyl-D-glutamate + meso-2,6-diaminopimelate + ATP = UDP-N-acetyl-alpha-D-muramoyl-L-alanyl-gamma-D-glutamyl-meso-2,6-diaminopimelate + ADP + phosphate + H(+). Its pathway is cell wall biogenesis; peptidoglycan biosynthesis. Catalyzes the addition of meso-diaminopimelic acid to the nucleotide precursor UDP-N-acetylmuramoyl-L-alanyl-D-glutamate (UMAG) in the biosynthesis of bacterial cell-wall peptidoglycan. The chain is UDP-N-acetylmuramoyl-L-alanyl-D-glutamate--2,6-diaminopimelate ligase from Photorhabdus laumondii subsp. laumondii (strain DSM 15139 / CIP 105565 / TT01) (Photorhabdus luminescens subsp. laumondii).